A 129-amino-acid polypeptide reads, in one-letter code: Small ribosomal subunit protein uS11 (129 aa).

Belongs to the universal ribosomal protein uS11 family. Part of the 30S ribosomal subunit. Interacts with proteins S7 and S18. Binds to IF-3.

In terms of biological role, located on the platform of the 30S subunit, it bridges several disparate RNA helices of the 16S rRNA. Forms part of the Shine-Dalgarno cleft in the 70S ribosome. The chain is Small ribosomal subunit protein uS11 from Actinobacillus succinogenes (strain ATCC 55618 / DSM 22257 / CCUG 43843 / 130Z).